Consider the following 314-residue polypeptide: Zinc transporter ZIP3 (314 aa).

The Extracellular segment spans residues 1 to 3 (MVK). A helical transmembrane segment spans residues 4-24 (LLVAKILCMVGVFFFMLLGSL). The Cytoplasmic segment spans residues 25-42 (LPVKIIETDFEKAHRSKK). A helical membrane pass occupies residues 43-63 (ILSLCNTFGGGVFLATCFNAL). Over 64 to 85 (LPAVREKLQKVLSLGHISTDYP) the chain is Extracellular. A helical membrane pass occupies residues 86-106 (LAETILLLGFFMTVFLEQLIL). Topologically, residues 107–169 (TFRKEKPSFI…QGLSRASPVR (63 aa)) are cytoplasmic. 2 positions are modified to phosphoserine: Ser125 and Ser129. The helical transmembrane segment at 170–190 (LLSLAFALSAHSVFEGLALGL) threads the bilayer. The Extracellular segment spans residues 191-196 (QEEGEK). Residues 197-217 (VVSLFVGVAVHETLVAVALGI) form a helical membrane-spanning segment. Topologically, residues 218–229 (SMARSAMPLRDA) are cytoplasmic. The helical transmembrane segment at 230-250 (AKLAVTVSAMIPLGIGLGLGI) threads the bilayer. At 251–262 (ESAQGVPGSVAS) the chain is on the extracellular side. A helical membrane pass occupies residues 263–283 (VLLQGLAGGTFLFITFLEILA). The Cytoplasmic segment spans residues 284 to 292 (KELEEKSDR). The chain crosses the membrane as a helical span at residues 293-313 (LLKVLFLVLGYTVLAGMVFLK). A topological domain (extracellular) is located at residue Trp314.

Belongs to the ZIP transporter (TC 2.A.5) family.

The protein localises to the cell membrane. The protein resides in the apical cell membrane. The catalysed reaction is Zn(2+)(in) = Zn(2+)(out). Functionally, transporter for the divalent cation Zn(2+). Mediates the influx of Zn(2+) into cells from extracellular space. Controls Zn(2+) accumulation into dentate gyrus granule cells in the hippocampus. Mediates Zn(2+) reuptake from the secreted milk within the alveolar lumen. The chain is Zinc transporter ZIP3 from Homo sapiens (Human).